We begin with the raw amino-acid sequence, 617 residues long: Dihydroxy-acid dehydratase (617 aa).

Asp-81 serves as a coordination point for Mg(2+). Cys-122 lines the [2Fe-2S] cluster pocket. Mg(2+) is bound by residues Asp-123 and Lys-124. The residue at position 124 (Lys-124) is an N6-carboxylysine. Cys-197 is a [2Fe-2S] cluster binding site. Glu-494 is a binding site for Mg(2+). Ser-520 (proton acceptor) is an active-site residue.

The protein belongs to the IlvD/Edd family. Homodimer. The cofactor is [2Fe-2S] cluster. Mg(2+) is required as a cofactor.

It carries out the reaction (2R)-2,3-dihydroxy-3-methylbutanoate = 3-methyl-2-oxobutanoate + H2O. It catalyses the reaction (2R,3R)-2,3-dihydroxy-3-methylpentanoate = (S)-3-methyl-2-oxopentanoate + H2O. Its pathway is amino-acid biosynthesis; L-isoleucine biosynthesis; L-isoleucine from 2-oxobutanoate: step 3/4. It participates in amino-acid biosynthesis; L-valine biosynthesis; L-valine from pyruvate: step 3/4. Functions in the biosynthesis of branched-chain amino acids. Catalyzes the dehydration of (2R,3R)-2,3-dihydroxy-3-methylpentanoate (2,3-dihydroxy-3-methylvalerate) into 2-oxo-3-methylpentanoate (2-oxo-3-methylvalerate) and of (2R)-2,3-dihydroxy-3-methylbutanoate (2,3-dihydroxyisovalerate) into 2-oxo-3-methylbutanoate (2-oxoisovalerate), the penultimate precursor to L-isoleucine and L-valine, respectively. This chain is Dihydroxy-acid dehydratase, found in Parafrankia sp. (strain EAN1pec).